The primary structure comprises 454 residues: Pup--protein ligase (454 aa).

Position 9 (Glu-9) interacts with Mg(2+). Arg-53 is an ATP binding site. Tyr-55 lines the Mg(2+) pocket. Asp-57 (proton acceptor) is an active-site residue. Position 63 (Glu-63) interacts with Mg(2+). Positions 66 and 420 each coordinate ATP.

This sequence belongs to the Pup ligase/Pup deamidase family. Pup-conjugating enzyme subfamily.

It catalyses the reaction ATP + [prokaryotic ubiquitin-like protein]-L-glutamate + [protein]-L-lysine = ADP + phosphate + N(6)-([prokaryotic ubiquitin-like protein]-gamma-L-glutamyl)-[protein]-L-lysine.. Its pathway is protein degradation; proteasomal Pup-dependent pathway. It functions in the pathway protein modification; protein pupylation. Functionally, catalyzes the covalent attachment of the prokaryotic ubiquitin-like protein modifier Pup to the proteasomal substrate proteins, thereby targeting them for proteasomal degradation. This tagging system is termed pupylation. The ligation reaction involves the side-chain carboxylate of the C-terminal glutamate of Pup and the side-chain amino group of a substrate lysine. This chain is Pup--protein ligase, found in Pseudarthrobacter chlorophenolicus (strain ATCC 700700 / DSM 12829 / CIP 107037 / JCM 12360 / KCTC 9906 / NCIMB 13794 / A6) (Arthrobacter chlorophenolicus).